Reading from the N-terminus, the 423-residue chain is Hydroxymethylglutaryl-CoA synthase-like protein AKT4-1 (423 aa).

Belongs to the thiolase-like superfamily. HMG-CoA synthase family.

Its pathway is mycotoxin biosynthesis. Its function is as follows. Hydroxymethylglutaryl-CoA synthase-like protein; part of the gene clusters that mediate the biosynthesis of the host-selective toxins (HSTs) AK-toxins responsible for Japanese pear black spot disease by the Japanese pear pathotype. AK-toxins are esters of 9,10-epoxy 8-hydroxy 9-methyldecatrienoic acid (EDA). On cellular level, AK-toxins affect plasma membrane of susceptible cells and cause a sudden increase in loss of K(+) after a few minutes of toxin treatment. The acyl-CoA ligase AKT1, the hydrolase AKT2 and enoyl-CoA hydratase AKT3 are all involved in the biosynthesis of the AK-, AF- and ACT-toxin common 9,10-epoxy-8-hydroxy-9-methyl-decatrienoic acid (EDA) structural moiety. Part of the EDA biosynthesis occurs in the peroxisome since these 3 enzymes are localized in peroxisomes. The exact roles of the 3 enzymes, as well as of additional AK-toxin clusters enzymes, including AKT4, AKT6 and AKTS1, have still to be elucidated. The Cytochrome P450 monooxygenase AKT7 on the other side functions to limit production of EDA and AK-toxin, probably via the catalysis of a side reaction of EDA or its precursor. This is Hydroxymethylglutaryl-CoA synthase-like protein AKT4-1 from Alternaria alternata (Alternaria rot fungus).